A 201-amino-acid chain; its full sequence is Bradykinin potentiating and C-type natriuretic peptides (201 aa).

The N-terminal stretch at 1-23 is a signal peptide; it reads MFVSRLAASGLLLLALLAVSLDG. A propeptide spanning residues 24 to 47 is cleaved from the precursor; the sequence is KPVQQWSQNWPGPKVPPLVVQQWS. Q48 is subject to Pyrrolidone carboxylic acid. Positions 58–60 are excised as a propeptide; that stretch reads LVV. Position 61 is a pyrrolidone carboxylic acid (Q61). Propeptides lie at residues 67 to 95 and 107 to 179; these read TQLQ…AALD and GSKA…LAKK. A disordered region spans residues 90-172; the sequence is PDAALDTPPA…GGGGGGGARR (83 aa). Residues 120–130 are compositionally biased toward low complexity; that stretch reads SKGASATSTAS. The span at 132 to 142 shows a compositional bias: basic and acidic residues; it reads PMRDLRTDGKQ. Residues 159–170 are compositionally biased toward gly residues; the sequence is PGGGGGGGGGGA. A disulfide bond links C185 and C201.

The protein in the N-terminal section; belongs to the bradykinin-potentiating peptide family. It in the central section; belongs to the bradykinin inhibitor peptide family. In the C-terminal section; belongs to the natriuretic peptide family. Venom gland.

The protein resides in the secreted. In terms of biological role, inhibits the activity of the angiotensin-converting enzyme (ACE) by a preferential interaction with its C-domain. May also potentiate the hypotensive effects of bradykinin. Antagonizes the vasodilatory actions of bradykinin at the B2 bradykinin receptor. Its function is as follows. has a vasorelaxant activity in rat aortic strips and a diuretic potency in anesthetized rats. May act by activating natriuretic receptors (NPR1 and/or NPR2). This is Bradykinin potentiating and C-type natriuretic peptides from Sistrurus catenatus edwardsii (Desert massasauga).